The primary structure comprises 219 residues: MSISAHGAKICGLSTPETVKAAFDGAAAFLGFVFFDKSPRNVAPEVAARLVEPVRGRGVQTVAVTVDPDDALIDRLMATMRPDLIQVHGKETPSRVREIAARAGVGVIKAFSVSSSADVDQAAAFDGVAQHLMFDARPVEGSVLPGGTGARFDWGLLAGRRFSRPHFLAGGLDPWNVGEAIKTSGTPLVDVSSGVERGPGLKDPALISAFLDAVKRAKD.

It belongs to the TrpF family.

It catalyses the reaction N-(5-phospho-beta-D-ribosyl)anthranilate = 1-(2-carboxyphenylamino)-1-deoxy-D-ribulose 5-phosphate. It functions in the pathway amino-acid biosynthesis; L-tryptophan biosynthesis; L-tryptophan from chorismate: step 3/5. In Caulobacter vibrioides (strain ATCC 19089 / CIP 103742 / CB 15) (Caulobacter crescentus), this protein is N-(5'-phosphoribosyl)anthranilate isomerase (trpF).